We begin with the raw amino-acid sequence, 637 residues long: Type II restriction enzyme and methyltransferase RM.BcgI (637 aa).

It in the C-terminal section; belongs to the N(4)/N(6)-methyltransferase family. In terms of assembly, heterotrimer of two A and one B subunit. Both subunits are necessary for DNA-binding, which is sequence non-specific. It depends on Mg(2+) as a cofactor.

It carries out the reaction Endonucleolytic cleavage of DNA to give specific double-stranded fragments with terminal 5'-phosphates.. The enzyme catalyses a 2'-deoxyadenosine in DNA + S-adenosyl-L-methionine = an N(6)-methyl-2'-deoxyadenosine in DNA + S-adenosyl-L-homocysteine + H(+). DNA restriction requires S-adenosyl-L-methionine and Mg(2+), and is inhibited by S-adenosyl-homocysteine. SAM may be a cofactor for DNA restriction. Its function is as follows. A B, G, H and S subtype restriction enzyme that recognizes the double-stranded sequence 5'-CGAN(6)TGC-3' and cleaves bilaterally and symmetrically 10 base pairs upstream and 12 base pairs downstream of the sequence to release a 34-base pair fragment. Methylation of the recognition sequence occurs on the adenine in either one or both strands; seems to methylate restricted DNA. This subunit has no methylation or DNA restriction activity on its own. The sequence is that of Type II restriction enzyme and methyltransferase RM.BcgI from Heyndrickxia coagulans (Weizmannia coagulans).